A 1770-amino-acid chain; its full sequence is MESQQLHQNPHCPHGSAYASVTSKEVPSNQDPLAVSASNLPEFDRDSTKVNSQEETTPGTSAVPENHHHVSPQPASVPPPQNGQYQQHGMMTPNKAMASNWAHYQQPSMMTCSHYQTSPAYYQPDPHYPLPQYIPPLSTSSPDPIDSQDQHSEVPQAKTKVRNNVLPPHPHTSEENFSTWVKFYIRFLKNSNLGDIIPNDQGEIKRQMTYEEHAYIYNTFQAFAPFHLLPTWVKQILEINYSDILTVLCKSVSKMQTNNQELKDWIALANLEYNGSTSADTFEITVSTIIQRLKENNINVSDRLACQLILKGLSGDFKYLRNQYRTKTNMKLSQLFAEIQLIYDENKIMNLNKPSQYKQHSEYKNVSRTSPNTTNTKVTTRNYHRTNSSKPRAAKAHNIATSSKFSRVNNDHINESTVSSQYLSDDNELSLGQQQKESKPTRTIDSNDELPDHLLIDSGASQTLVRSAHYLHHATPNSEINIVDAQKQDIPINAIGNLHFNFQNGTKTSIKALHTPNIAYDLLSLSELTNQNITACFTRNTLERSDGTVLAPIVKHGDFYWLSKKYLIPSHISKLTINNVNKSKSVNKYPYPLIHRMLGHANFRSIQKSLKKNAVTYLKESDIEWSNASTYQCPDCLIGKSTKHRHVKGSRLKYQESYEPFQYLHTDIFGPVHHLPKSAPSYFISFTDEKTRFQWVYPLHDRREESILNVFTSILAFIKNQFNARVLVIQMDRGSEYTNKTLHKFFTNRGITACYTTTADSRAHGVAERLNRTLLNDCRTLLHCSGLPNHLWFSAVEFSTIIRNSLVSPKNDKSARQHAGLAGLDITTILPFGQPVIVNNHNPDSKIHPRGIPGYALHPSRNSYGYIIYLPSLKKTVDTTNYVILQNNQTKLDQFDYDTLTFDDDLNRLTAHNQSFIEQNETEQSYDQNTESDHDYQSEIEINSDPLVNDFSSQSLNPLQLDKEPVQKVRAPKEVDADISEYNILPSTIRSRTPHIINKESTEMGGTIESDTTSPRHSSTFTARNQKRPGSPNDMIDLTSQDRVNYGLENIKTTRLGGTEEPYIQRNSDTNIKYRTTNSTPSIDDRSSNSDSTTPIISIETKAACDNTPSIDTDPPEYRSSDHATPNIMPDKSSKNVTADSILDDLPLPDLTHKSPTDTSDVSKDIPHIHSRQTNSSLGGMDDSNVLTTTKSKKRSLEDNETEIEVSRDTWNNKNMRSLEPPRSKKRINLIAAIKGVKSIKPVRTTLRYDEAITYNKDNKEKDRYVEAYHKEISQLLKMNTWDTNKYYDRNDIDPKKVINSMFIFNKKRDGTHKARFVARGDIQHPDTYDSDMQSNTVHHYALMTSLSIALDNDYYITQLDISSAYLYADIKEELYIRPPPHLGLNDKLLRLRKSLYGLKQSGANWYETIKSYLINCCDMQEVRGWSCVFKNSQVTICLFVDDMILFSKDLNANKKIITTLKKQYDTKIINLGEGDNEIQYDILGLEIKYQRSKYMKLGMEKSLTEKLPKLNVPLNPKGKKLRAPGQPGHYIDQDELEIDEDEYKEKVHEMQKLIGLASYVGYKFRFDLLYYINTLAQHILFPSRQVLDMTYELIQFMWDTRDKQLIWHKNKPTKPDNKLVAISDASYGNQPYYKSQIGNIFLLNGKVIGGKSTKASLTCTSTTEAEIHAVSEAIPLLNNLSHLVQELNKKPIIKGLLTDSRSTISIIKSTNEEKFRNRFFGTKAMRLRDEVSGNNLYVYYIETKKNIADVMTKPLPIKTFKLLTNKWIH.

2 disordered regions span residues 1–88 (MESQ…YQQH) and 359–449 (QHSE…SNDE). Composition is skewed to polar residues over residues 19-39 (ASVT…SASN) and 49-60 (KVNSQEETTPGT). An RNA-binding region spans residues 295-397 (ENNINVSDRL…SSKPRAAKAH (103 aa)). Over residues 369-381 (TSPNTTNTKVTTR) the composition is skewed to low complexity. 2 stretches are compositionally biased toward polar residues: residues 399–408 (IATSSKFSRV) and 415–435 (ESTV…GQQQ). Asp457 serves as the catalytic For protease activity; shared with dimeric partner. The interval 579 to 636 (NVNKSKSVNKYPYPLIHRMLGHANFRSIQKSLKKNAVTYLKESDIEWSNASTYQCPDC) is integrase-type zinc finger-like. One can recognise an Integrase catalytic domain in the interval 656–831 (ESYEPFQYLH…AGLDITTILP (176 aa)). Mg(2+) is bound by residues Asp667 and Asp732. Disordered stretches follow at residues 1005-1038 (GGTI…MIDL), 1057-1135 (GGTE…KSSK), 1146-1165 (LPLP…VSKD), and 1170-1205 (HSRQ…TEIE). 2 stretches are compositionally biased toward polar residues: residues 1009-1024 (ESDT…FTAR) and 1065-1082 (QRNS…STPS). Residues 1151–1165 (LTHKSPTDTSDVSKD) show a composition bias toward basic and acidic residues. The Bipartite nuclear localization signal motif lies at 1193–1227 (KKRSLEDNETEIEVSRDTWNNKNMRSLEPPRSKKR). The region spanning 1353 to 1491 (NDYYITQLDI…DILGLEIKYQ (139 aa)) is the Reverse transcriptase Ty1/copia-type domain. Mg(2+)-binding residues include Asp1361, Asp1442, Asp1443, Asp1625, Glu1667, and Asp1700. The RNase H Ty1/copia-type domain occupies 1625-1767 (DASYGNQPYY…IKTFKLLTNK (143 aa)).

In terms of assembly, the capsid protein forms a homotrimer, from which the VLPs are assembled. The protease is a homodimer, whose active site consists of two apposed aspartic acid residues. Post-translationally, initially, virus-like particles (VLPs) are composed of the structural unprocessed proteins Gag and Gag-Pol, and also contain the host initiator methionine tRNA (tRNA(i)-Met) which serves as a primer for minus-strand DNA synthesis, and a dimer of genomic Ty RNA. Processing of the polyproteins occurs within the particle and proceeds by an ordered pathway, called maturation. First, the protease (PR) is released by autocatalytic cleavage of the Gag-Pol polyprotein, and this cleavage is a prerequisite for subsequent processing at the remaining sites to release the mature structural and catalytic proteins. Maturation takes place prior to the RT reaction and is required to produce transposition-competent VLPs.

Its subcellular location is the cytoplasm. It localises to the nucleus. The catalysed reaction is DNA(n) + a 2'-deoxyribonucleoside 5'-triphosphate = DNA(n+1) + diphosphate. The enzyme catalyses Endonucleolytic cleavage to 5'-phosphomonoester.. Capsid protein (CA) is the structural component of the virus-like particle (VLP), forming the shell that encapsulates the retrotransposons dimeric RNA genome. The particles are assembled from trimer-clustered units and there are holes in the capsid shells that allow for the diffusion of macromolecules. CA also has nucleocapsid-like chaperone activity, promoting primer tRNA(i)-Met annealing to the multipartite primer-binding site (PBS), dimerization of Ty2 RNA and initiation of reverse transcription. Functionally, the aspartyl protease (PR) mediates the proteolytic cleavages of the Gag and Gag-Pol polyproteins after assembly of the VLP. Its function is as follows. Reverse transcriptase/ribonuclease H (RT) is a multifunctional enzyme that catalyzes the conversion of the retro-elements RNA genome into dsDNA within the VLP. The enzyme displays a DNA polymerase activity that can copy either DNA or RNA templates, and a ribonuclease H (RNase H) activity that cleaves the RNA strand of RNA-DNA heteroduplexes during plus-strand synthesis and hydrolyzes RNA primers. The conversion leads to a linear dsDNA copy of the retrotransposon that includes long terminal repeats (LTRs) at both ends. In terms of biological role, integrase (IN) targets the VLP to the nucleus, where a subparticle preintegration complex (PIC) containing at least integrase and the newly synthesized dsDNA copy of the retrotransposon must transit the nuclear membrane. Once in the nucleus, integrase performs the integration of the dsDNA into the host genome. This chain is Transposon Ty2-OR2 Gag-Pol polyprotein (TY2B-OR2), found in Saccharomyces cerevisiae (strain ATCC 204508 / S288c) (Baker's yeast).